The sequence spans 140 residues: Coiled-coil domain-containing protein 126 (140 aa).

An N-terminal signal peptide occupies residues 1-35 (MFRTISRKNMSQKLSFLLLVFGLIWGLMLLHYTLQ). N-linked (GlcNAc...) asparagine glycosylation occurs at N110. Positions 118–130 (NGTNGNLVPVTTN) are enriched in low complexity. Positions 118-140 (NGTNGNLVPVTTNKRTSVSGSVR) are disordered. A compositionally biased stretch (polar residues) spans 131–140 (KRTSVSGSVR).

The protein resides in the secreted. This Mus musculus (Mouse) protein is Coiled-coil domain-containing protein 126 (Ccdc126).